We begin with the raw amino-acid sequence, 242 residues long: Small ribosomal subunit protein uS7m (242 aa).

A mitochondrion-targeting transit peptide spans 1–37 (MAAPTAKVSRGWSGLALGVRIAVLRLPGLTQVRWSRY). Residue Lys-228 is modified to N6-acetyllysine.

This sequence belongs to the universal ribosomal protein uS7 family. In terms of assembly, component of the mitochondrial ribosome small subunit (28S) which comprises a 12S rRNA and about 30 distinct proteins.

Its subcellular location is the mitochondrion. This chain is Small ribosomal subunit protein uS7m (MRPS7), found in Bos taurus (Bovine).